A 31-amino-acid polypeptide reads, in one-letter code: Relaxin B chain (31 aa).

Q1 bears the Pyrrolidone carboxylic acid mark.

The protein belongs to the insulin family. As to quaternary structure, heterodimer of a B chain and an A chain linked by two disulfide bonds.

Its subcellular location is the secreted. Relaxin is an ovarian hormone that acts with estrogen to produce dilatation of the birth canal in many mammals. In Phocoenoides dalli dalli (Dall's porpoise), this protein is Relaxin B chain.